Reading from the N-terminus, the 258-residue chain is Aspartate/glutamate leucyltransferase (258 aa).

It belongs to the R-transferase family. Bpt subfamily.

It localises to the cytoplasm. It carries out the reaction N-terminal L-glutamyl-[protein] + L-leucyl-tRNA(Leu) = N-terminal L-leucyl-L-glutamyl-[protein] + tRNA(Leu) + H(+). It catalyses the reaction N-terminal L-aspartyl-[protein] + L-leucyl-tRNA(Leu) = N-terminal L-leucyl-L-aspartyl-[protein] + tRNA(Leu) + H(+). Functionally, functions in the N-end rule pathway of protein degradation where it conjugates Leu from its aminoacyl-tRNA to the N-termini of proteins containing an N-terminal aspartate or glutamate. The protein is Aspartate/glutamate leucyltransferase of Rhizobium leguminosarum bv. trifolii (strain WSM2304).